The sequence spans 540 residues: MIAVNNVSLRFADRKLFEDVNIKFTPGNCYGLIGANGAGKSTFLKVLSGEIEPQTGDVHMSPGERLAVLKQNHFEYEEYEVLKVVIMGHKRLYEVMQEKDAIYMKPDFSDEDGIRAAELEGEFAELNGWEAESEAAILLKGLGISEDLHTKKMADLGGSEKVKVLLAQALFGKPDVLLLDEPTNHLDLQAIQWLEEFLINFENTVIVVSHDRHFLNKVCTHIADLDFNKIQIYVGNYDFWYESSQLALKLSQEANKKKEEQIKQLQEFVARFSANASKSKQATSRKKLLEKITLDDIKPSSRRYPYVNFTPEREIGNDVLRVEGLTKTIDGVKVLDNVSFIMNREDKIAFTGRNELAVTTLFKIISGEMEADSGTFKWGVTTSQAYFPKDNSEYFEGSDLNLVDWLRQYSPHDQSESFLRGFLGRMLFSGEEVHKKANVLSGGEKVRCMLSKAMLSGANILILDEPTNHLDLESITALNNGLISFKGAMLFTSHDHQFVQTIANRIIEITPNGIVDKQMSYDEFLENADVQKKLTELYAE.

2 consecutive ABC transporter domains span residues 2–252 (IAVN…KLSQ) and 320–537 (LRVE…LTEL). An ATP-binding site is contributed by 34–41 (GANGAGKS).

The protein belongs to the ABC transporter superfamily.

This is an uncharacterized protein from Bacillus subtilis (strain 168).